A 147-amino-acid chain; its full sequence is MAGSKSPKGEFAGRKLLLKRRASRWHHYKYVNKALSLKLKADPLEGAPMGRGIVVEKVGLEAKQPNSAIRKCVRVQLIKNGRQVTAFAPGNHAINFIDEHDEVVIEGIGGPSGQAKGDIPGVRYKVVMVGKNSIRELVRGRQEKVKR.

The protein belongs to the universal ribosomal protein uS12 family. Part of the 30S ribosomal subunit.

Functionally, with S4 and S5 plays an important role in translational accuracy. Located at the interface of the 30S and 50S subunits. This is Small ribosomal subunit protein uS12 from Methanococcus maripaludis (strain C7 / ATCC BAA-1331).